Reading from the N-terminus, the 327-residue chain is Putative D-threonate 4-phosphate dehydrogenase (327 aa).

2 residues coordinate substrate: H139 and T140. Residues H169, H213, and H268 each contribute to the a divalent metal cation site. K276, N285, and R294 together coordinate substrate.

Belongs to the PdxA family. PdxA2 subfamily. In terms of assembly, homodimer. The cofactor is a divalent metal cation.

The catalysed reaction is 4-O-phospho-D-threonate + NAD(+) = dihydroxyacetone phosphate + CO2 + NADH. In terms of biological role, catalyzes the NAD-dependent oxidation and subsequent decarboxylation of D-threonate 4-phosphate to produce dihydroxyacetone phosphate (DHAP). This Salmonella typhi protein is Putative D-threonate 4-phosphate dehydrogenase.